The sequence spans 172 residues: Ribosome maturation factor RimM (172 aa).

Residues 96 to 168 (DGEFYYHEII…RIEVELMEGL (73 aa)) enclose the PRC barrel domain.

This sequence belongs to the RimM family. Binds ribosomal protein uS19.

It is found in the cytoplasm. Its function is as follows. An accessory protein needed during the final step in the assembly of 30S ribosomal subunit, possibly for assembly of the head region. Essential for efficient processing of 16S rRNA. May be needed both before and after RbfA during the maturation of 16S rRNA. It has affinity for free ribosomal 30S subunits but not for 70S ribosomes. The sequence is that of Ribosome maturation factor RimM from Streptococcus thermophilus (strain ATCC BAA-491 / LMD-9).